The following is a 2375-amino-acid chain: Talin-2 (2375 aa).

The 319-residue stretch at 88–406 (RPQKIRMLDG…GYIDIILKKK (319 aa)) folds into the FERM domain. Positions 312–406 (GVSFFLVKEK…GYIDIILKKK (95 aa)) are interaction with PIP5K1C. Residues Ser-428, Ser-450, Ser-624, and Ser-1024 each carry the phosphoserine modification. Tyr-1666 carries the phosphotyrosine modification. The 171-residue stretch at 2205–2375 (TEWVDPEDPT…KRLQAAGNAV (171 aa)) folds into the I/LWEQ domain.

In terms of assembly, interacts directly with PIP5K1C.

It localises to the cytoplasm. It is found in the cell junction. Its subcellular location is the focal adhesion. The protein resides in the synapse. The protein localises to the cell membrane. It localises to the cytoskeleton. Its function is as follows. As a major component of focal adhesion plaques that links integrin to the actin cytoskeleton, may play an important role in cell adhesion. Recruits PIP5K1C to focal adhesion plaques and strongly activates its kinase activity. The chain is Talin-2 (Tln2) from Mus musculus (Mouse).